The chain runs to 162 residues: Protein NrdI (162 aa).

This sequence belongs to the NrdI family.

Its function is as follows. Probably involved in ribonucleotide reductase function. The chain is Protein NrdI from Streptococcus pyogenes serotype M28 (strain MGAS6180).